The following is a 63-amino-acid chain: Translational regulator CsrA (63 aa).

This sequence belongs to the CsrA/RsmA family. Homodimer; the beta-strands of each monomer intercalate to form a hydrophobic core, while the alpha-helices form wings that extend away from the core.

It localises to the cytoplasm. Functionally, a key translational regulator that binds mRNA to regulate translation initiation and/or mRNA stability. Mediates global changes in gene expression, shifting from rapid growth to stress survival by linking envelope stress, the stringent response and the catabolite repression systems. Usually binds in the 5'-UTR; binding at or near the Shine-Dalgarno sequence prevents ribosome-binding, repressing translation, binding elsewhere in the 5'-UTR can activate translation and/or stabilize the mRNA. Its function is antagonized by small RNA(s). The polypeptide is Translational regulator CsrA (Haemophilus influenzae (strain 86-028NP)).